Here is a 51-residue protein sequence, read N- to C-terminus: Large ribosomal subunit protein bL33 (51 aa).

The protein belongs to the bacterial ribosomal protein bL33 family. As to quaternary structure, part of the 50S ribosomal subunit. Cross-links to the P and E site tRNAs.

The protein is Large ribosomal subunit protein bL33 of Pseudomonas aeruginosa (strain ATCC 15692 / DSM 22644 / CIP 104116 / JCM 14847 / LMG 12228 / 1C / PRS 101 / PAO1).